The sequence spans 45 residues: Large ribosomal subunit protein bL34 (45 aa).

The span at 1–10 (MTQRTLGGTN) shows a compositional bias: polar residues. The interval 1 to 45 (MTQRTLGGTNRKQKRTSGFRARMRTHNGRKVIQARRSKGRHRLAV) is disordered. Residues 11 to 45 (RKQKRTSGFRARMRTHNGRKVIQARRSKGRHRLAV) are compositionally biased toward basic residues.

The protein belongs to the bacterial ribosomal protein bL34 family.

In Synechocystis sp. (strain ATCC 27184 / PCC 6803 / Kazusa), this protein is Large ribosomal subunit protein bL34 (rpmH).